A 158-amino-acid chain; its full sequence is Transcription elongation factor GreA (158 aa).

Positions 4–70 (QKQYPMTQEG…IEQDIQRIEH (67 aa)) form a coiled coil.

The protein belongs to the GreA/GreB family.

Necessary for efficient RNA polymerase transcription elongation past template-encoded arresting sites. The arresting sites in DNA have the property of trapping a certain fraction of elongating RNA polymerases that pass through, resulting in locked ternary complexes. Cleavage of the nascent transcript by cleavage factors such as GreA or GreB allows the resumption of elongation from the new 3'terminus. GreA releases sequences of 2 to 3 nucleotides. This chain is Transcription elongation factor GreA, found in Staphylococcus aureus (strain Mu3 / ATCC 700698).